Here is a 282-residue protein sequence, read N- to C-terminus: MTGFGARLVEATSRRGQLCLGIDPHPELLRAWDLPTTADGLAAFCDICVEAFSGFAIVKPQVAFFEAYGAAGFAVLEYTIAALRSVGVLVLADAKRGDIGSTMAAYAAAWAGNSPLAADAVTASPYLGFGSLRPLLEVAAAHDRGVFVLASTSNLEGATVQRATFDGRIVAQLIVDQAAFVNREMNRSFHRSEPGCLGYVGVVVGATVFGAPDVSALGGPVLVPGVGAQGGHPEALGGLGGAAPGQLLPAVSRAVLRAGPGVSELRAAGEQMRDAVAYLAAV.

The Proton donor role is filled by Lys-95.

It belongs to the OMP decarboxylase family. Type 2 subfamily.

It carries out the reaction orotidine 5'-phosphate + H(+) = UMP + CO2. Its pathway is pyrimidine metabolism; UMP biosynthesis via de novo pathway; UMP from orotate: step 2/2. The sequence is that of Orotidine 5'-phosphate decarboxylase (pyrF) from Mycobacterium leprae (strain TN).